Here is a 137-residue protein sequence, read N- to C-terminus: Cellular retinoic acid-binding protein 1 (137 aa).

A Nuclear localization signal motif is present at residues 21–31 (KALGVNAMLRK). 132–134 (RIY) contributes to the all-trans-retinoate binding site.

Belongs to the calycin superfamily. Fatty-acid binding protein (FABP) family.

It localises to the cytoplasm. Its function is as follows. Cytosolic CRABPs may regulate the access of retinoic acid to the nuclear retinoic acid receptors. In Hippocampus comes (Tiger tail seahorse), this protein is Cellular retinoic acid-binding protein 1 (crabp1).